The sequence spans 196 residues: Probable malonic semialdehyde reductase RutE (196 aa).

Belongs to the nitroreductase family. HadB/RutE subfamily. The cofactor is FMN.

The catalysed reaction is 3-hydroxypropanoate + NADP(+) = 3-oxopropanoate + NADPH + H(+). May reduce toxic product malonic semialdehyde to 3-hydroxypropionic acid, which is excreted. The protein is Probable malonic semialdehyde reductase RutE of Escherichia coli O81 (strain ED1a).